Here is a 1056-residue protein sequence, read N- to C-terminus: RNA cytidine acetyltransferase (1056 aa).

286–295 (GRGKSAALGI) is a binding site for ATP. The span at 433-446 (QNNTSGRESTQTAV) shows a compositional bias: polar residues. The disordered stretch occupies residues 433-463 (QNNTSGRESTQTAVVSRDNKEKDSHLHSQSR). Residues 449 to 463 (RDNKEKDSHLHSQSR) are compositionally biased toward basic and acidic residues. Residue Arg-475 participates in ATP binding. An N-acetyltransferase domain is found at 566 to 706 (VLLPPIDPKD…VKLRDAKTLP (141 aa)). Acetyl-CoA-binding positions include 638-640 (IAT), 645-651 (ASMGYGS), and Asn-739. Phosphoserine is present on residues Ser-1001, Ser-1007, and Ser-1010.

Belongs to the RNA cytidine acetyltransferase family. NAT10 subfamily. As to quaternary structure, interacts with TAN1. Associates with 90S pre-ribosomal particles.

It localises to the nucleus. The protein localises to the nucleolus. It catalyses the reaction a cytidine in 18S rRNA + acetyl-CoA + ATP + H2O = an N(4)-acetylcytidine in 18S rRNA + ADP + phosphate + CoA + H(+). The catalysed reaction is a cytidine in tRNA + acetyl-CoA + ATP + H2O = an N(4)-acetylcytidine in tRNA + ADP + phosphate + CoA + H(+). Functionally, RNA cytidine acetyltransferase with specificity toward both 18S rRNA and tRNAs. Catalyzes the formation of N(4)-acetylcytidine (ac4C) at positions 1280 and 1773 in 18S rRNA. Required for early nucleolar cleavages of precursor rRNA at sites A0, A1 and A2 during 18S rRNA synthesis. Catalyzes the formation of ac4C at position 12 in serine and leucine tRNAs. Requires the tRNA-binding adapter protein TAN1 for full tRNA acetyltransferase activity but not for 18S rRNA acetylation. This Saccharomyces cerevisiae (strain ATCC 204508 / S288c) (Baker's yeast) protein is RNA cytidine acetyltransferase.